We begin with the raw amino-acid sequence, 463 residues long: Cysteine--tRNA ligase (463 aa).

Residue Cys-29 coordinates Zn(2+). The short motif at 31-41 (PTVYNYAHIGN) is the 'HIGH' region element. Positions 211, 236, and 240 each coordinate Zn(2+). The short motif at 269–273 (KMSKS) is the 'KMSKS' region element. Lys-272 contacts ATP.

This sequence belongs to the class-I aminoacyl-tRNA synthetase family. As to quaternary structure, monomer. The cofactor is Zn(2+).

The protein localises to the cytoplasm. The catalysed reaction is tRNA(Cys) + L-cysteine + ATP = L-cysteinyl-tRNA(Cys) + AMP + diphosphate. This Caulobacter vibrioides (strain ATCC 19089 / CIP 103742 / CB 15) (Caulobacter crescentus) protein is Cysteine--tRNA ligase.